The following is a 1006-amino-acid chain: Pentatricopeptide repeat-containing protein At1g30610, chloroplastic (1006 aa).

Residues 1-40 (MAVTISTNAFVNASLLDESRNSFWRPLFHQPYYNCRRVVR) constitute a chloroplast transit peptide. Disordered stretches follow at residues 180 to 219 (LSKS…ERGS) and 248 to 292 (SSVA…IARG). Residues 194 to 219 (ESFRKRYSKQEYHRSSDTSRGIERGS) show a composition bias toward basic and acidic residues. Positions 254–263 (WSNSGESSVT) are enriched in polar residues. Basic and acidic residues predominate over residues 265 to 284 (PKDESFRRRYSKQEHHRSSD). 10 PPR repeats span residues 468 to 502 (TDYT…DRYK), 506 to 536 (IRII…MLLQ), 542 to 572 (DMVA…MRSP), 592 to 626 (DVVV…GQKP), 627 to 657 (SPVT…MQKS), 661 to 695 (NALA…GIVG), 759 to 789 (LVVT…MKKV), 793 to 827 (NLVT…GNHI), 840 to 874 (DTYT…GYHF), and 875 to 909 (NAKR…NRIP).

This sequence belongs to the PPR family. P subfamily.

The protein localises to the plastid. It localises to the chloroplast. Functionally, may play a role in embryogenesis. The protein is Pentatricopeptide repeat-containing protein At1g30610, chloroplastic (EMB2279) of Arabidopsis thaliana (Mouse-ear cress).